Reading from the N-terminus, the 309-residue chain is Tagatose-6-phosphate kinase (309 aa).

This sequence belongs to the carbohydrate kinase PfkB family. LacC subfamily.

The enzyme catalyses D-tagatofuranose 6-phosphate + ATP = D-tagatofuranose 1,6-bisphosphate + ADP + H(+). It participates in carbohydrate metabolism; D-tagatose 6-phosphate degradation; D-glyceraldehyde 3-phosphate and glycerone phosphate from D-tagatose 6-phosphate: step 1/2. This is Tagatose-6-phosphate kinase from Streptococcus pyogenes serotype M2 (strain MGAS10270).